A 190-amino-acid chain; its full sequence is Casparian strip membrane protein 1 (190 aa).

The Cytoplasmic portion of the chain corresponds to 1–24 (MKAESGSADAKLPLPPPVGRKRRG). The chain crosses the membrane as a helical span at residues 25-45 (LAILDFLLRLLAIGATLSAAI). The Extracellular portion of the chain corresponds to 46-72 (AMGTNNETLKFFTQFFQFNARFYNLSA). 2 N-linked (GlcNAc...) asparagine glycosylation sites follow: Asn-51 and Asn-69. Residues 73–93 (FIYFVIANATVGLYLLLSLPF) form a helical membrane-spanning segment. Residues 94-107 (SIFDIVRPRAAAFR) lie on the Cytoplasmic side of the membrane. A helical transmembrane segment spans residues 108-128 (VLLIFFDTVMVAVCTSGAAAA). The Extracellular segment spans residues 129 to 157 (TAIMYVARRGNTKTNWFSICQQFNSFCDQ). Residues 158–178 (ATGALGASFAAVVLLILLVLL) form a helical membrane-spanning segment. Residues 179 to 190 (SASTLHRQRADF) are Cytoplasmic-facing.

Belongs to the Casparian strip membrane proteins (CASP) family. Homodimer and heterodimers.

Its subcellular location is the cell membrane. Regulates membrane-cell wall junctions and localized cell wall deposition. Required for establishment of the Casparian strip membrane domain (CSD) and the subsequent formation of Casparian strips, a cell wall modification of the root endodermis that determines an apoplastic barrier between the intraorganismal apoplasm and the extraorganismal apoplasm and prevents lateral diffusion. In Pinus taeda (Loblolly pine), this protein is Casparian strip membrane protein 1.